The sequence spans 39 residues: MFAEGRIPLWLVATIAGLGVIAVLGLFFYGAYAGLGSSM.

The chain crosses the membrane as a helical span at residues 7 to 27 (IPLWLVATIAGLGVIAVLGLF).

This sequence belongs to the PsbJ family. PSII is composed of 1 copy each of membrane proteins PsbA, PsbB, PsbC, PsbD, PsbE, PsbF, PsbH, PsbI, PsbJ, PsbK, PsbL, PsbM, PsbT, PsbX, PsbY, PsbZ, Psb30/Ycf12, peripheral proteins PsbO, CyanoQ (PsbQ), PsbU, PsbV and a large number of cofactors. It forms dimeric complexes.

It localises to the cellular thylakoid membrane. Functionally, one of the components of the core complex of photosystem II (PSII). PSII is a light-driven water:plastoquinone oxidoreductase that uses light energy to abstract electrons from H(2)O, generating O(2) and a proton gradient subsequently used for ATP formation. It consists of a core antenna complex that captures photons, and an electron transfer chain that converts photonic excitation into a charge separation. This is Photosystem II reaction center protein J from Microcystis aeruginosa (strain NIES-843 / IAM M-2473).